Reading from the N-terminus, the 228-residue chain is uncharacterized protein (228 aa).

3 residues coordinate S-adenosyl-L-methionine: glycine 179, isoleucine 199, and leucine 208.

It belongs to the class IV-like SAM-binding methyltransferase superfamily. RNA methyltransferase TrmH family.

This is an uncharacterized protein from Borreliella burgdorferi (strain ATCC 35210 / DSM 4680 / CIP 102532 / B31) (Borrelia burgdorferi).